The primary structure comprises 334 residues: Porphobilinogen deaminase (334 aa).

At Cys255 the chain carries S-(dipyrrolylmethanemethyl)cysteine.

This sequence belongs to the HMBS family. As to quaternary structure, monomer. Requires dipyrromethane as cofactor.

The catalysed reaction is 4 porphobilinogen + H2O = hydroxymethylbilane + 4 NH4(+). It participates in porphyrin-containing compound metabolism; protoporphyrin-IX biosynthesis; coproporphyrinogen-III from 5-aminolevulinate: step 2/4. Tetrapolymerization of the monopyrrole PBG into the hydroxymethylbilane pre-uroporphyrinogen in several discrete steps. This chain is Porphobilinogen deaminase, found in Burkholderia orbicola (strain MC0-3).